A 536-amino-acid chain; its full sequence is Membrane protein insertase YidC (536 aa).

5 helical membrane-spanning segments follow: residues 7 to 27, 332 to 352, 411 to 431, 449 to 469, and 488 to 508; these read LLVMGLLLVSFLIFTQWQQDF, FWLLIFIHSIIGNWGLAIMGV, MGGCLPLILQMPIFIALYWTF, LSAQDPYYIFPVLMGLSMFLL, and FMPVIFTVFFLWFPSGLVLYW.

It belongs to the OXA1/ALB3/YidC family. Type 1 subfamily. As to quaternary structure, interacts with the Sec translocase complex via SecD. Specifically interacts with transmembrane segments of nascent integral membrane proteins during membrane integration.

The protein localises to the cell inner membrane. Its function is as follows. Required for the insertion and/or proper folding and/or complex formation of integral membrane proteins into the membrane. Involved in integration of membrane proteins that insert both dependently and independently of the Sec translocase complex, as well as at least some lipoproteins. Aids folding of multispanning membrane proteins. The polypeptide is Membrane protein insertase YidC (Haemophilus ducreyi (strain 35000HP / ATCC 700724)).